We begin with the raw amino-acid sequence, 686 residues long: XK-related protein 5 (686 aa).

The next 5 membrane-spanning stretches (helical) occupy residues 33–53 (LLWG…QALS), 205–225 (HFWV…WLVA), 239–259 (LFNL…WDSP), 265–285 (VTFY…ATDF), and 297–317 (IAGV…YYSL). 3 disordered regions span residues 340-362 (DKTE…ESSG), 444-470 (LQRK…NSSA), and 490-589 (FASD…VGLA). 2 stretches are compositionally biased toward polar residues: residues 455–470 (LPSS…NSSA) and 490–509 (FASD…TQGE). Residues 523-536 (QGKGTGGQQRGGEG) are compositionally biased toward gly residues. Positions 550 to 567 (VATSSQQEGSPATLQTAH) are enriched in polar residues.

It belongs to the XK family.

The protein localises to the cell membrane. The sequence is that of XK-related protein 5 from Pan troglodytes (Chimpanzee).